A 307-amino-acid chain; its full sequence is Ribosomal protein L11 methyltransferase (307 aa).

Residues T156, G177, D199, and N243 each contribute to the S-adenosyl-L-methionine site.

The protein belongs to the methyltransferase superfamily. PrmA family.

The protein localises to the cytoplasm. The catalysed reaction is L-lysyl-[protein] + 3 S-adenosyl-L-methionine = N(6),N(6),N(6)-trimethyl-L-lysyl-[protein] + 3 S-adenosyl-L-homocysteine + 3 H(+). In terms of biological role, methylates ribosomal protein L11. The polypeptide is Ribosomal protein L11 methyltransferase (Syntrophomonas wolfei subsp. wolfei (strain DSM 2245B / Goettingen)).